Here is a 491-residue protein sequence, read N- to C-terminus: Transmembrane protein 39B (491 aa).

The interval 1 to 56 is disordered; the sequence is MAGGRRGANRTTYCRSPLSNDTGSVGNGNHSTSSPVTGVRSRTRNGSGTGMSSPPL. N-linked (GlcNAc...) asparagine glycans are attached at residues N9, N20, N29, and N45. 2 stretches are compositionally biased toward polar residues: residues 9–36 and 44–56; these read NRTTYCRSPLSNDTGSVGNGNHSTSSPV and RNGSGTGMSSPPL. A run of 8 helical transmembrane segments spans residues 79-99, 115-135, 152-172, 185-205, 290-310, 322-342, 423-443, and 449-469; these read LFELHLFACHLIALFVHYVNI, TSLNFHLIDYNMLVFTVIVLA, LSFPHSVFLVTARFAVLTLAG, TYSVLSLLFLCYPFGMYIPFF, EVLVSSMLSAYYVAFVPVWFV, CELFILVSVSTSVILMRHLLP, ILNILIILEGAMIFYQLYSLM, and HQTISLALILFSNYYAFFKLL.

The protein belongs to the TMEM39 family. As to expression, expressed in the ovary, followed by the intestine and brain.

The protein localises to the endoplasmic reticulum membrane. Functionally, may protect the cells against DNA damage caused by exposure to the cold-warming stress and facilitates tissue damage repair during the recovery phase. This is Transmembrane protein 39B from Danio rerio (Zebrafish).